The primary structure comprises 529 residues: Cytochrome P450 monooxygenase CLM2 (529 aa).

The chain crosses the membrane as a helical span at residues Leu-2–His-19. N-linked (GlcNAc...) asparagine glycans are attached at residues Asn-244 and Asn-281. A heme-binding site is contributed by Cys-438.

The protein belongs to the cytochrome P450 family. Heme is required as a cofactor.

The protein resides in the membrane. The catalysed reaction is (-)-longiborneol + reduced [NADPH--hemoprotein reductase] + O2 = culmorin + oxidized [NADPH--hemoprotein reductase] + H2O + H(+). It participates in mycotoxin biosynthesis. In terms of biological role, cytochrome P450 monooxygenase involved in the biosynthesis of culmorin, a tricyclic sesquiterpene diol reported to have antifungal activity and some phytotoxicity to wheat coleoptile tissue, contributing to Fusarium head blight disease. The terpene cyclase CLM1 is responsible for the cyclization of farnesyl diphosphate into the intermediate longiborneol. Longiborneol is then hydroxylated in a regio- and endo-stereoselective manner at position C-11 by the cytochrome P450 monooxygenase CLM2 to produce culmorin. Additional non-specific oxygenases are also able to hydroxylate longiborneol at other sites than C-11 leading to 3-hydroxylongiborneol, 5-hydroxylongiborneol, 12-hydroxylongiborneol and 15-hydroxylongiborneol. Moreover, another oxygenase capable of installing a C-11 exo-hydroxy group in longiborneol can also yield 11-epi-acetylculmorin. The production of these longiborneol derivatives is dwarfed by the high abundance of culmorin, suggesting that CLM2 displays superior enzymatic activity to the unidentified, possibly promiscuous, additional oxygenases. The protein is Cytochrome P450 monooxygenase CLM2 of Gibberella zeae (strain ATCC MYA-4620 / CBS 123657 / FGSC 9075 / NRRL 31084 / PH-1) (Wheat head blight fungus).